Consider the following 629-residue polypeptide: Ionotropic receptor 75a (629 aa).

The Extracellular portion of the chain corresponds to 1 to 335 (MQLVQLANFV…GDVFLQPFSP (335 aa)). Residues Asn-61, Asn-112, Asn-126, Asn-144, Asn-166, and Asn-232 are each glycosylated (N-linked (GlcNAc...) asparagine). The chain crosses the membrane as a helical span at residues 336–356 (LVWYLFGGVLSLIGVLLWITF). Topologically, residues 357–374 (YMECKRMQKRWRLDYLPS) are cytoplasmic. The helical transmembrane segment at 375–395 (LLSTFLISFGAACIQSSSLIP) threads the bilayer. The Extracellular portion of the chain corresponds to 396–402 (RSAGGRL). The helical transmembrane segment at 403 to 423 (IYFALFLISFIMYNYYTSVVV) threads the bilayer. Residues 424–592 (SSLLSSPVKS…NFVITVGMEY (169 aa)) are Cytoplasmic-facing. A helical membrane pass occupies residues 593–613 (VAPLLLMLICADILVVVILLV). Residues 614–629 (ELAWKRFFTRPLTIHP) lie on the Extracellular side of the membrane.

The protein belongs to the glutamate-gated ion channel (TC 1.A.10.1) family. As to expression, expressed in neurons in the antennal coeloconic 2 (ac2) sensillum class of sensory hairs (at protein level).

It is found in the cell membrane. It localises to the cell projection. Its subcellular location is the dendrite. Functionally, olfactory receptor for propionic, butyric and 2-oxopentanoic acids. In Drosophila sechellia (Fruit fly), this protein is Ionotropic receptor 75a.